We begin with the raw amino-acid sequence, 246 residues long: 3'(2'),5'-bisphosphate nucleotidase CysQ (246 aa).

Mg(2+) is bound by residues Glu64, Asp83, Leu85, Asp86, and Asp205. Glu64 is a substrate binding site. Substrate contacts are provided by residues 85–88 (LDGT) and Asp205.

The protein belongs to the inositol monophosphatase superfamily. CysQ family. The cofactor is Mg(2+).

It localises to the cell inner membrane. It catalyses the reaction adenosine 3',5'-bisphosphate + H2O = AMP + phosphate. In terms of biological role, converts adenosine-3',5'-bisphosphate (PAP) to AMP. In Escherichia coli O157:H7, this protein is 3'(2'),5'-bisphosphate nucleotidase CysQ.